We begin with the raw amino-acid sequence, 534 residues long: Importin subunit alpha-1b (534 aa).

The IBB domain maps to 1–58; the sequence is MSLRPSERAEVRRSRYKVAVDADEGRRRREDNMVEIRKSRREESLLKKRRDGLPAAAA. ARM repeat units follow at residues 111–151, 154–193, 196–236, 238–277, 280–319, 322–362, 365–404, and 408–447; these read SPPI…NIAS, SDNT…NVAG, PKCR…NFCR, KPQP…YLSD, NDKI…NIVT, DMQT…NITA, REQI…NATS, and HDQI…NILK. Residues 505–534 are disordered; that stretch reads DAMPSGDNAQNGFNFGNQQPNVPSGGFNFG. Residues 514 to 523 show a composition bias toward low complexity; the sequence is QNGFNFGNQQ.

This sequence belongs to the importin alpha family. Forms a complex with importin subunit beta-1. The whole complex, most stable and composed of importin alpha and importin beta, is referred to as PTAC or pore targeting complex. As to expression, highly expressed in root and weakly in callus, etiolated leaf and green leaf.

Its subcellular location is the cytoplasm. It is found in the perinuclear region. Functions in nuclear protein import. Binds specifically and directly to substrates containing either a simple or bipartite NLS motif. Promotes docking of import substrates to the nuclear envelope. In conjunction with importin beta-1, mediates the nuclear envelope docking, and the subsequent translocation into the nucleus of the constitutive morphogenetic 1 (COP1) protein containing bipartite NLS motif. In Oryza sativa subsp. japonica (Rice), this protein is Importin subunit alpha-1b.